The following is a 188-amino-acid chain: Cytidylate kinase (188 aa).

7-15 lines the ATP pocket; sequence GKIGSGKST.

This sequence belongs to the cytidylate kinase family. Type 2 subfamily.

The protein resides in the cytoplasm. It catalyses the reaction CMP + ATP = CDP + ADP. It carries out the reaction dCMP + ATP = dCDP + ADP. The sequence is that of Cytidylate kinase (cmk) from Thermoplasma acidophilum (strain ATCC 25905 / DSM 1728 / JCM 9062 / NBRC 15155 / AMRC-C165).